We begin with the raw amino-acid sequence, 564 residues long: M protein, serotype 12 (564 aa).

A signal peptide spans 1 to 41 (MAKNTTNRHYSLRKLKTGTASVAVALTVVGAGLVAGQTVRA). A coiled-coil region spans residues 44 to 505 (SDLVAEKQRL…RAGKASDSQT (462 aa)). 4 C repeats span residues 285 to 319 (KQLE…EAEL), 327 to 361 (AKVT…VEAA), 363 to 397 (KQLE…EKDL), and 405 to 439 (DKVK…EKAL). 2 disordered regions span residues 372–391 (SEAS…EAKK) and 404–438 (LDKV…VEKA). Basic and acidic residues-rich tracts occupy residues 404 to 413 (LDKVKEEKQI) and 421 to 438 (LRRD…VEKA). D repeat units lie at residues 472 to 477 (AKLEAE), 478 to 483 (AKALKE), 486 to 491 (AKQAEE), and 493 to 498 (AKLRAG). A disordered region spans residues 493–550 (AKLRAGKASDSQTPDAKPGNKAVPGKGQAPQAGTKPNQNKAPMKETKRQLPSTGETAN). The LPXTG sorting signal signature appears at 542-546 (LPSTG). The residue at position 545 (Thr-545) is a Pentaglycyl murein peptidoglycan amidated threonine. The propeptide at 546–564 (GETANPFFTAAALTVMAAA) is removed by sortase.

The protein belongs to the M protein family.

The protein localises to the secreted. Its subcellular location is the cell wall. In terms of biological role, this protein is one of the different antigenic serotypes of protein M. Protein M is closely associated with virulence of the bacterium and can render the organism resistant to phagocytosis. This Streptococcus pyogenes protein is M protein, serotype 12 (emm12).